A 422-amino-acid chain; its full sequence is Tyrosine--tRNA ligase (422 aa).

Position 35 (Tyr-35) interacts with L-tyrosine. Positions 40 to 49 match the 'HIGH' region motif; sequence PTADSLHIGH. Tyr-170 and Gln-174 together coordinate L-tyrosine. Residues 232 to 236 carry the 'KMSKS' region motif; it reads KFGKT. Position 235 (Lys-235) interacts with ATP. The S4 RNA-binding domain maps to 355–421; sequence LTLVDLLVES…GKKKYFLVTY (67 aa).

This sequence belongs to the class-I aminoacyl-tRNA synthetase family. TyrS type 1 subfamily. In terms of assembly, homodimer.

Its subcellular location is the cytoplasm. It carries out the reaction tRNA(Tyr) + L-tyrosine + ATP = L-tyrosyl-tRNA(Tyr) + AMP + diphosphate + H(+). Its function is as follows. Catalyzes the attachment of tyrosine to tRNA(Tyr) in a two-step reaction: tyrosine is first activated by ATP to form Tyr-AMP and then transferred to the acceptor end of tRNA(Tyr). The chain is Tyrosine--tRNA ligase from Bacillus pumilus (strain SAFR-032).